The sequence spans 490 residues: Betaine aldehyde dehydrogenase (490 aa).

Isoleucine 27 and aspartate 93 together coordinate K(+). 150–152 is an NAD(+) binding site; it reads GAW. Catalysis depends on lysine 162, which acts as the Charge relay system. An NAD(+)-binding site is contributed by 176–179; it reads KPSE. Valine 180 contacts K(+). 230-233 contacts NAD(+); that stretch reads GTDT. Leucine 246 is a K(+) binding site. The Proton acceptor role is filled by glutamate 252. Glycine 254, cysteine 286, and glutamate 387 together coordinate NAD(+). The active-site Nucleophile is cysteine 286. The residue at position 286 (cysteine 286) is a Cysteine sulfenic acid (-SOH). Residues lysine 457 and glycine 460 each coordinate K(+). Residue glutamate 464 is the Charge relay system of the active site.

The protein belongs to the aldehyde dehydrogenase family. In terms of assembly, dimer of dimers. K(+) serves as cofactor.

It carries out the reaction betaine aldehyde + NAD(+) + H2O = glycine betaine + NADH + 2 H(+). Its pathway is amine and polyamine biosynthesis; betaine biosynthesis via choline pathway; betaine from betaine aldehyde: step 1/1. In terms of biological role, involved in the biosynthesis of the osmoprotectant glycine betaine. Catalyzes the irreversible oxidation of betaine aldehyde to the corresponding acid. This is Betaine aldehyde dehydrogenase from Pseudomonas savastanoi pv. phaseolicola (strain 1448A / Race 6) (Pseudomonas syringae pv. phaseolicola (strain 1448A / Race 6)).